The sequence spans 463 residues: MTAEMDMALMQGCVTFQDVAICFSHEEWRLLDETQRLLYLSVMLQNFALINSQGCGHKTEDEERRVSTRASKGLRSETTPKTNLCEKCVPILQDILCLPGLPGQKHSTEASSKVDQHQDHNSTGKPLEKNADRSSYLFYLSAKSFPSWDVEKDLPDILSLLKSQVCPKTKKYRKSTEGRKETSHESDKSEECQSLSSQKQTLAHHPKTSNGKKLYECSKCGKTFRGKYSLDQHQRVHTGERPWECRDCGKFFSQTSHLNDHRRIHTGERPYECSECGKLFRQNSSLVDHQKTHTGARPYECSQCGKSFSQKATLVKHKRVHTGERPYKCSECGNSFSQSAILNQHRRIHTGVKPYECRECGKSFSQKATLIKHQRVHTGERPYKCSECGKSFSQSSILIQHRRIHTGARPYECSQCGKSFSQKSGLIQHQVVHTGERPYECDTCGNSFSQCSSLIHHQKCHNA.

The 76-residue stretch at 14-89 (VTFQDVAICF…PKTNLCEKCV (76 aa)) folds into the KRAB domain. 2 disordered regions span residues 106–128 (HSTE…KPLE) and 171–211 (KYRK…TSNG). Residues 174–191 (KSTEGRKETSHESDKSEE) show a composition bias toward basic and acidic residues. Residues 192-201 (CQSLSSQKQT) are compositionally biased toward polar residues. C2H2-type zinc fingers lie at residues 215–237 (YECS…QRVH), 243–265 (WECR…RRIH), 271–293 (YECS…QKTH), 299–321 (YECS…KRVH), 327–349 (YKCS…RRIH), 355–377 (YECR…QRVH), 383–405 (YKCS…RRIH), 411–433 (YECS…QVVH), and 439–461 (YECD…QKCH).

Belongs to the krueppel C2H2-type zinc-finger protein family. As to quaternary structure, interacts with HNRPK. Expressed in ovary and liver, and at lower levels in brain and muscle.

It localises to the nucleus. May be a transcriptional repressor. The protein is Zinc finger protein interacting with ribonucleoprotein K (Zik1) of Mus musculus (Mouse).